The sequence spans 335 residues: BTB and MATH domain-containing protein 39 (335 aa).

An MATH domain is found at Met-14 to Leu-141. One can recognise a BTB domain in the interval Ala-161 to Val-226.

The protein is BTB and MATH domain-containing protein 39 of Caenorhabditis briggsae.